Here is a 372-residue protein sequence, read N- to C-terminus: MFSESPIKRRKSTRINVGNVPIGDGAPIAVQSMTNTDTMDVGATVAQIQAIQDAGADIVRVSVPTMDAAEAFKSIKEQVTIPLVADIHFDYRIALKVAKYGVDCLRINPGNIGSEERIRAVVDAAREHNIPIRIGVNGGSLERDLQEKYGEPSPEALLESAMRHVNILRRLDFDQFKISVKASDVFLAVGAYRLLAKEIDQPLHLGITEAGGMRSGSVKSAVGLGMLLAEGIGDTLRVSLAADPVQEIKVGFDILKSLRIRSRGINFIACPSCSRQEFDVVSTMNQLEERLEDIIEPVSVSVIGCVVNGPGEALVSDIGLAGASRRSGLYINGERQKARIDNNNIVEQLEGYVRDFIAKKQNQTPIDIKIVE.

Positions 270, 273, 305, and 312 each coordinate [4Fe-4S] cluster.

Belongs to the IspG family. [4Fe-4S] cluster is required as a cofactor.

It carries out the reaction (2E)-4-hydroxy-3-methylbut-2-enyl diphosphate + oxidized [flavodoxin] + H2O + 2 H(+) = 2-C-methyl-D-erythritol 2,4-cyclic diphosphate + reduced [flavodoxin]. The protein operates within isoprenoid biosynthesis; isopentenyl diphosphate biosynthesis via DXP pathway; isopentenyl diphosphate from 1-deoxy-D-xylulose 5-phosphate: step 5/6. Its function is as follows. Converts 2C-methyl-D-erythritol 2,4-cyclodiphosphate (ME-2,4cPP) into 1-hydroxy-2-methyl-2-(E)-butenyl 4-diphosphate. In Pseudoalteromonas translucida (strain TAC 125), this protein is 4-hydroxy-3-methylbut-2-en-1-yl diphosphate synthase (flavodoxin).